The sequence spans 967 residues: Regulator of G-protein signaling 3 (967 aa).

The PDZ domain maps to 18 to 95 (QITIRRGKDG…EIILLVWRVV (78 aa)). The disordered stretch occupies residues 115-135 (THDLLSPPNKREKNCTHGAPT). At Arg-167 the chain carries Omega-N-methylarginine. Residues 389–705 (QLAATPTERK…EGGLSLRVQN (317 aa)) form a disordered region. Polar residues-rich tracts occupy residues 476–486 (LPSSKNPSPSQ), 512–549 (SPSS…TEVP), and 577–597 (SSAS…QGSL). Over residues 650–676 (GEDEDAEEGEEGEEGEEDEEDDTNDDN) the composition is skewed to acidic residues. The segment covering 677–687 (YGDRNEAKRSS) has biased composition (basic and acidic residues). Ser-713, Ser-716, Ser-748, and Ser-777 each carry phosphoserine. The disordered stretch occupies residues 807–830 (FRRRNESPGAQPAGKADKTTKSFK). Positions 821–830 (KADKTTKSFK) are enriched in basic and acidic residues. One can recognise an RGS domain in the interval 842–967 (SLEKLLLHKY…INQKKMSPPL (126 aa)).

As to quaternary structure, binds EFNB1 and EFNB2. Binds the GNB1-GNG2 heterodimer. Binds ESR1. Phosphorylated by cyclic GMP-dependent protein kinase. Post-translationally, ISGylated. As to expression, detected in kidney, uterus, ovary, heart, brain, spleen, lung and testis.

The protein localises to the cytoplasm. It localises to the membrane. Its subcellular location is the nucleus. In terms of biological role, down-regulates signaling from heterotrimeric G-proteins by increasing the GTPase activity of the alpha subunits, thereby driving them into their inactive GDP-bound form. Down-regulates G-protein-mediated release of inositol phosphates and activation of MAP kinases. The chain is Regulator of G-protein signaling 3 (Rgs3) from Rattus norvegicus (Rat).